The primary structure comprises 365 residues: Succinyl-diaminopimelate desuccinylase (365 aa).

H65 contacts Zn(2+). Residue D67 is part of the active site. D96 contacts Zn(2+). E126 serves as the catalytic Proton acceptor. E127, E155, and H340 together coordinate Zn(2+).

It belongs to the peptidase M20A family. DapE subfamily. As to quaternary structure, homodimer. Requires Zn(2+) as cofactor. Co(2+) serves as cofactor.

It catalyses the reaction N-succinyl-(2S,6S)-2,6-diaminopimelate + H2O = (2S,6S)-2,6-diaminopimelate + succinate. Its pathway is amino-acid biosynthesis; L-lysine biosynthesis via DAP pathway; LL-2,6-diaminopimelate from (S)-tetrahydrodipicolinate (succinylase route): step 3/3. In terms of biological role, catalyzes the hydrolysis of N-succinyl-L,L-diaminopimelic acid (SDAP), forming succinate and LL-2,6-diaminopimelate (DAP), an intermediate involved in the bacterial biosynthesis of lysine and meso-diaminopimelic acid, an essential component of bacterial cell walls. This Campylobacter jejuni subsp. jejuni serotype O:2 (strain ATCC 700819 / NCTC 11168) protein is Succinyl-diaminopimelate desuccinylase.